The primary structure comprises 349 residues: Core protein VP7 (349 aa).

N287 is a glycosylation site (N-linked (GlcNAc...) asparagine; by host).

It belongs to the orbivirus VP7 family. As to quaternary structure, homotrimer that assemble in a complex of 260 capsomers on an inner scaffold composed of VP3.

It is found in the virion. Its function is as follows. The VP7 protein is one of the five proteins (with VP1, VP3, VP4, and VP6) which form the inner capsid of the virus. The sequence is that of Core protein VP7 (Segment-7) from Antilocapra americana (Pronghorn).